The primary structure comprises 165 residues: MRKAVCPGSFDPVTNGHLDIISRAAALYDEVTVAVLVNKAKRALFSVEERMDMVREATAQYPNVVVESFSGLLVDFCRARGIPVIIKGLRAVSDFDYELQMAQMNHSLAGVETLFLSTNPLYSFLSSSLVKEVAAYGGDVSTLIPDSVARRLRTRLFDPSREPDH.

A substrate-binding site is contributed by serine 9. Residues serine 9–phenylalanine 10 and histidine 17 contribute to the ATP site. Positions 41, 73, and 87 each coordinate substrate. ATP contacts are provided by residues glycine 88–arginine 90, glutamate 98, and tyrosine 122–serine 128.

It belongs to the bacterial CoaD family. In terms of assembly, homohexamer. The cofactor is Mg(2+).

It is found in the cytoplasm. It catalyses the reaction (R)-4'-phosphopantetheine + ATP + H(+) = 3'-dephospho-CoA + diphosphate. It functions in the pathway cofactor biosynthesis; coenzyme A biosynthesis; CoA from (R)-pantothenate: step 4/5. In terms of biological role, reversibly transfers an adenylyl group from ATP to 4'-phosphopantetheine, yielding dephospho-CoA (dPCoA) and pyrophosphate. The polypeptide is Phosphopantetheine adenylyltransferase (Acidothermus cellulolyticus (strain ATCC 43068 / DSM 8971 / 11B)).